Consider the following 39-residue polypeptide: Photosystem II reaction center protein J (39 aa).

The helical transmembrane segment at 7-27 (IPLWLIGTIVGILVIGLIGIY) threads the bilayer.

The protein belongs to the PsbJ family. As to quaternary structure, PSII is composed of 1 copy each of membrane proteins PsbA, PsbB, PsbC, PsbD, PsbE, PsbF, PsbH, PsbI, PsbJ, PsbK, PsbL, PsbM, PsbT, PsbX, PsbY, PsbZ, Psb30/Ycf12, at least 3 peripheral proteins of the oxygen-evolving complex and a large number of cofactors. It forms dimeric complexes.

It localises to the plastid. It is found in the chloroplast thylakoid membrane. Its function is as follows. One of the components of the core complex of photosystem II (PSII). PSII is a light-driven water:plastoquinone oxidoreductase that uses light energy to abstract electrons from H(2)O, generating O(2) and a proton gradient subsequently used for ATP formation. It consists of a core antenna complex that captures photons, and an electron transfer chain that converts photonic excitation into a charge separation. The polypeptide is Photosystem II reaction center protein J (Welwitschia mirabilis (Tree tumbo)).